The following is a 694-amino-acid chain: E3 ubiquitin-protein ligase SPL11 (694 aa).

Positions 1–12 (MAGDRAEEEEGE) are enriched in acidic residues. 2 disordered regions span residues 1-21 (MAGD…ARAA) and 343-363 (NGME…ACSS). The 75-residue stretch at 272–346 (TIPDEFRCPI…SQWCETNGME (75 aa)) folds into the U-box domain. Over residues 350-363 (RSTQPNKPTPACSS) the composition is skewed to polar residues. 6 ARM repeats span residues 398–438 (NANN…NLSI), 439–479 (HEDN…SLSV), 480–520 (IDEY…NLCI), 521–561 (YQGN…ILSS), 562–602 (HPEG…HLCS), and 603–650 (GEHH…FLVQ). The segment covering 650–667 (QQQEEQESQSQASAQVPP) has biased composition (low complexity). The segment at 650–694 (QQQEEQESQSQASAQVPPQATPEQVPENDIPEQLDSPASQYPMVV) is disordered.

As to quaternary structure, interacts with SPIN1 (via N-terminus). In terms of tissue distribution, highly expressed in leaf, at intermediate levels in shoot and weakly in root.

Its subcellular location is the nucleus. It is found in the cytoplasm. It carries out the reaction S-ubiquitinyl-[E2 ubiquitin-conjugating enzyme]-L-cysteine + [acceptor protein]-L-lysine = [E2 ubiquitin-conjugating enzyme]-L-cysteine + N(6)-ubiquitinyl-[acceptor protein]-L-lysine.. It functions in the pathway protein modification; protein ubiquitination. In terms of biological role, E3 ubiquitin-protein ligase that negatively regulates programmed cell death and disease resistance. Participates in flowering time control by mediating ubiquitination and subsequent proteasomal degradation of SPIN1. The sequence is that of E3 ubiquitin-protein ligase SPL11 (SPL11) from Oryza sativa subsp. japonica (Rice).